A 165-amino-acid chain; its full sequence is Small ribosomal subunit protein uS5 (165 aa).

One can recognise an S5 DRBM domain in the interval 10–73 (LVEKLVAVDR…EAARRNMITV (64 aa)).

It belongs to the universal ribosomal protein uS5 family. In terms of assembly, part of the 30S ribosomal subunit. Contacts proteins S4 and S8.

In terms of biological role, with S4 and S12 plays an important role in translational accuracy. Located at the back of the 30S subunit body where it stabilizes the conformation of the head with respect to the body. This is Small ribosomal subunit protein uS5 from Acinetobacter baylyi (strain ATCC 33305 / BD413 / ADP1).